Here is a 283-residue protein sequence, read N- to C-terminus: 4-diphosphocytidyl-2-C-methyl-D-erythritol kinase (283 aa).

Residue lysine 9 is part of the active site. 93-103 (PIAAGLAGGSS) is a binding site for ATP. Aspartate 135 is a catalytic residue.

Belongs to the GHMP kinase family. IspE subfamily.

The enzyme catalyses 4-CDP-2-C-methyl-D-erythritol + ATP = 4-CDP-2-C-methyl-D-erythritol 2-phosphate + ADP + H(+). Its pathway is isoprenoid biosynthesis; isopentenyl diphosphate biosynthesis via DXP pathway; isopentenyl diphosphate from 1-deoxy-D-xylulose 5-phosphate: step 3/6. Catalyzes the phosphorylation of the position 2 hydroxy group of 4-diphosphocytidyl-2C-methyl-D-erythritol. The sequence is that of 4-diphosphocytidyl-2-C-methyl-D-erythritol kinase from Macrococcus caseolyticus (strain JCSC5402) (Macrococcoides caseolyticum).